Here is a 214-residue protein sequence, read N- to C-terminus: Adenylate kinase (214 aa).

Residue 10–15 (GAGKGT) participates in ATP binding. The interval 30 to 59 (STGDMFRAAVKNETPLGLEAKSYMDKGHLV) is NMP. AMP contacts are provided by residues threonine 31, arginine 36, 57 to 59 (HLV), 85 to 88 (GFPR), and glutamine 92. Positions 126–163 (GRWICPVCGASYHTMFNPPKEAGVCDKDGGKLYQREDD) are LID. An ATP-binding site is contributed by arginine 127. 2 residues coordinate Zn(2+): cysteine 130 and cysteine 133. ATP is bound at residue 136 to 137 (SY). Zn(2+) contacts are provided by cysteine 150 and aspartate 153. Arginine 160 and arginine 171 together coordinate AMP. An ATP-binding site is contributed by glutamine 199.

The protein belongs to the adenylate kinase family. As to quaternary structure, monomer.

Its subcellular location is the cytoplasm. The enzyme catalyses AMP + ATP = 2 ADP. The protein operates within purine metabolism; AMP biosynthesis via salvage pathway; AMP from ADP: step 1/1. Its function is as follows. Catalyzes the reversible transfer of the terminal phosphate group between ATP and AMP. Plays an important role in cellular energy homeostasis and in adenine nucleotide metabolism. This is Adenylate kinase from Brevibacillus brevis (strain 47 / JCM 6285 / NBRC 100599).